A 341-amino-acid chain; its full sequence is Delta(1)-pyrroline-2-carboxylate/Delta(1)-piperideine-2-carboxylate reductase (341 aa).

S52 serves as the catalytic Charge relay system. H53 functions as the Proton donor in the catalytic mechanism. R57 lines the substrate pocket. 125-129 contacts NADP(+); it reads HFAAL. T165 is a substrate binding site. Residue 183 to 185 coordinates NADP(+); the sequence is DMA. 191 to 192 contributes to the substrate binding site; that stretch reads HG. D193 (charge relay system) is an active-site residue. Residues 235–236 and 308–314 each bind NADP(+); these read HK and RMPGERR.

It belongs to the LDH2/MDH2 oxidoreductase family. Homodimer.

The enzyme catalyses L-pipecolate + NADP(+) = Delta(1)-piperideine-2-carboxylate + NADPH + H(+). The catalysed reaction is L-proline + NADP(+) = 1-pyrroline-2-carboxylate + NADPH + H(+). It carries out the reaction N-methyl-L-alanine + NADP(+) + H2O = methylamine + pyruvate + NADPH + H(+). Its activity is regulated as follows. Is inhibited by the substrate analog pyrrole-2-carboxylate, but not by N-formylphenylalanine. Functionally, catalyzes the reduction of both Delta(1)-pyrroline-2-carboxylate (Pyr2C) and Delta(1)-piperideine-2-carboxylate (Pip2C) to L-proline and L-pipecolate, respectively, using NADPH as the electron donor. Can use NADH instead of NADPH, although with much less efficiency. Plays an essential role in the catabolism of D-proline and D-lysine, which allows P.putida to grow on each of these amino-acids as a sole carbon source; D-lysine appears to be catabolized only through the pipecolate pathway. Can also catalyze the reverse oxidation reactions, albeit at a much lower rate. To a lesser extent, is able to catalyze in vitro the NADPH-dependent formation of N-alkyl-L-amino acids from the corresponding alpha-oxo acids and alkylamines, e.g. the formation of N-methylalanine from pyruvate and N-methylamine; cannot use ammonia as substrate for these reductive amination reactions. Shows neither malate dehydrogenase nor lactate dehydrogenase activity. This is Delta(1)-pyrroline-2-carboxylate/Delta(1)-piperideine-2-carboxylate reductase from Pseudomonas putida (Arthrobacter siderocapsulatus).